We begin with the raw amino-acid sequence, 141 residues long: VLSSADKNNVKACWGKIGSHAGEYGAEALERTFCSFPTTKTYFPHFDLSHGSAQVQTHGQKVADALTKAVAHINDLPNALSDLSDLHAYKLRVDPVNFKFLSHCLLVTLACHHPEEFTPAVHASLDKFFSAVSTVLTSKYR.

Residues 1–141 (VLSSADKNNV…VSTVLTSKYR (141 aa)) enclose the Globin domain. Position 3 is a phosphoserine (Ser3). Residues Lys7 and Lys11 each carry the N6-succinyllysine modification. Position 16 is an N6-acetyllysine; alternate (Lys16). An N6-succinyllysine; alternate modification is found at Lys16. Residue Tyr24 is modified to Phosphotyrosine. Ser35 bears the Phosphoserine mark. An N6-succinyllysine modification is found at Lys40. Residue Ser49 is modified to Phosphoserine. An O2-binding site is contributed by His58. Heme b is bound at residue His87. At Ser102 the chain carries Phosphoserine. Thr108 is subject to Phosphothreonine. Ser124 carries the post-translational modification Phosphoserine. Phosphothreonine occurs at positions 134 and 137. Residue Ser138 is modified to Phosphoserine.

Belongs to the globin family. As to quaternary structure, heterotetramer of two alpha chains and two beta chains. In terms of tissue distribution, red blood cells.

Functionally, involved in oxygen transport from the lung to the various peripheral tissues. In terms of biological role, hemopressin acts as an antagonist peptide of the cannabinoid receptor CNR1. Hemopressin-binding efficiently blocks cannabinoid receptor CNR1 and subsequent signaling. The polypeptide is Hemoglobin subunit alpha (HBA) (Panthera pardus saxicolor (Northern Persian leopard)).